The following is a 347-amino-acid chain: Core-capsid bridging protein (347 aa).

The disordered stretch occupies residues 290-320 (GYRGTTFQRRATAPSRRRGPSRRRRRRKATL). Over residues 304–318 (SRRRGPSRRRRRRKA) the composition is skewed to basic residues.

It belongs to the adenoviridae core-capsid bridging protein family. In terms of assembly, monomer. Homodimer. Exists in equilibrium between monomers and dimers in solution. Interacts with the histone-like nucleoprotein; this interactions bridge the virus core to the capsid. Interacts with core protein X; this interactions bridge the virus core to the capsid. Interacts with the endosome lysis protein VI; this interactions bridge the virus core to the capsid. Interacts with the peripentonal hexons. Interacts with host NPM1; this interaction might play a role in virus assembly.

The protein localises to the virion. The protein resides in the host nucleus. It is found in the host nucleolus. Functionally, associates loosely with the viral DNA to form an outer shell around the nucleoprotein-DNA complex and links it with the capsid by binding the endosome lysis protein. Dissociates from the viral genome during entry. Might be involved in nuclear capsid assembly of the viral particles through its association with NPM1/nucleophosmin. The sequence is that of Core-capsid bridging protein from Homo sapiens (Human).